The sequence spans 292 residues: AT-hook motif nuclear-localized protein 23 (292 aa).

Positions 23 to 100 (HLHHNSSSDD…SKNKPKPPVI (78 aa)) are disordered. A compositionally biased stretch (gly residues) spans 60-79 (SGGGSGSSGGGGGHGGGGDV). The a.T hook DNA-binding region spans 82–94 (RRPRGRPPGSKNK). One can recognise a PPC domain in the interval 106-242 (ANTLRAHILE…EDEQQQQLGG (137 aa)).

It localises to the nucleus. In terms of biological role, transcription factor that specifically binds AT-rich DNA sequences related to the nuclear matrix attachment regions (MARs). The sequence is that of AT-hook motif nuclear-localized protein 23 from Arabidopsis thaliana (Mouse-ear cress).